A 310-amino-acid chain; its full sequence is Cytosolic Fe-S cluster assembly factor Nubp1 homolog (310 aa).

[4Fe-4S] cluster-binding residues include C9, C23, C26, and C32. Residue 63-70 (GKGGVGKS) participates in ATP binding. [4Fe-4S] cluster contacts are provided by C240 and C243.

The protein belongs to the Mrp/NBP35 ATP-binding proteins family. NUBP1/NBP35 subfamily. As to quaternary structure, heterotetramer of 2 Nubp1 and 2 Nubp2 chains. Requires [4Fe-4S] cluster as cofactor.

It is found in the cytoplasm. Its function is as follows. Component of the cytosolic iron-sulfur (Fe/S) protein assembly (CIA) machinery. Required for maturation of extramitochondrial Fe-S proteins. The Nubp1-Nubp2 heterotetramer forms a Fe-S scaffold complex, mediating the de novo assembly of an Fe-S cluster and its transfer to target apoproteins. The chain is Cytosolic Fe-S cluster assembly factor Nubp1 homolog from Drosophila virilis (Fruit fly).